Consider the following 102-residue polypeptide: Protein Tat (102 aa).

Residues 1–24 (MEPVDPRLEPWKHPGSQPKTACNN) form an interaction with human CREBBP region. Residues 1–48 (MEPVDPRLEPWKHPGSQPKTACNNCYCKKCCYHCQVCFLTKGLGISYG) are transactivation. Cys-22, Cys-25, and Cys-27 together coordinate Zn(2+). The tract at residues 22–37 (CNNCYCKKCCYHCQVC) is cysteine-rich. An N6-acetyllysine; by host PCAF modification is found at Lys-28. 4 residues coordinate Zn(2+): Cys-30, His-33, Cys-34, and Cys-37. Residues 38–48 (FLTKGLGISYG) form a core region. The tract at residues 48-102 (GRKKRRQRRGPPQGSQTHQVSLSKQPTSQPRGDPTGPKESKEKVERETETDPAVQ) is disordered. The Nuclear localization signal, RNA-binding (TAR), and protein transduction motif lies at 49 to 57 (RKKRRQRRG). An interaction with the host capping enzyme RNGTT region spans residues 49 to 86 (RKKRRQRRGPPQGSQTHQVSLSKQPTSQPRGDPTGPKE). N6-acetyllysine; by host EP300 and GCN5L2 occurs at positions 50 and 51. Arg-52 and Arg-53 each carry asymmetric dimethylarginine; by host PRMT6. Residues 62–77 (SQTHQVSLSKQPTSQP) are compositionally biased toward polar residues. Lys-71 is covalently cross-linked (Glycyl lysine isopeptide (Lys-Gly) (interchain with G-Cter in ubiquitin)). The Cell attachment site signature appears at 78–80 (RGD). Basic and acidic residues predominate over residues 83-96 (GPKESKEKVERETE).

The protein belongs to the lentiviruses Tat family. Interacts with host CCNT1. Associates with the P-TEFb complex composed at least of Tat, P-TEFb (CDK9 and CCNT1), TAR RNA, RNA Pol II. Recruits the HATs CREBBP, TAF1/TFIID, EP300, PCAF and GCN5L2. Interacts with host KAT5/Tip60; this interaction targets the latter to degradation. Interacts with the host deacetylase SIRT1. Interacts with host capping enzyme RNGTT; this interaction stimulates RNGTT. Binds to host KDR, and to the host integrins ITGAV/ITGB3 and ITGA5/ITGB1. Interacts with host KPNB1/importin beta-1 without previous binding to KPNA1/importin alpha-1. Interacts with EIF2AK2. Interacts with host nucleosome assembly protein NAP1L1; this interaction may be required for the transport of Tat within the nucleus, since the two proteins interact at the nuclear rim. Interacts with host C1QBP/SF2P32; this interaction involves lysine-acetylated Tat. Interacts with the host chemokine receptors CCR2, CCR3 and CXCR4. Interacts with host DPP4/CD26; this interaction may trigger an anti-proliferative effect. Interacts with host LDLR. Interacts with the host extracellular matrix metalloproteinase MMP1. Interacts with host PRMT6; this interaction mediates Tat's methylation. Interacts with, and is ubiquitinated by MDM2/Hdm2. Interacts with host PSMC3 and HTATIP2. Interacts with STAB1; this interaction may overcome SATB1-mediated repression of IL2 and IL2RA (interleukin) in T cells by binding to the same domain than HDAC1. Interacts (when acetylated) with human CDK13, thereby increasing HIV-1 mRNA splicing and promoting the production of the doubly spliced HIV-1 protein Nef. Interacts with host TBP; this interaction modulates the activity of transcriptional pre-initiation complex. Interacts with host RELA. Interacts with host PLSCR1; this interaction negatively regulates Tat transactivation activity by altering its subcellular distribution. Asymmetrical arginine methylation by host PRMT6 seems to diminish the transactivation capacity of Tat and affects the interaction with host CCNT1. Post-translationally, acetylation by EP300, CREBBP, GCN5L2/GCN5 and PCAF regulates the transactivation activity of Tat. EP300-mediated acetylation of Lys-50 promotes dissociation of Tat from the TAR RNA through the competitive binding to PCAF's bromodomain. In addition, the non-acetylated Tat's N-terminus can also interact with PCAF. PCAF-mediated acetylation of Lys-28 enhances Tat's binding to CCNT1. Lys-50 is deacetylated by SIRT1. In terms of processing, polyubiquitination by host MDM2 does not target Tat to degradation, but activates its transactivation function and fosters interaction with CCNT1 and TAR RNA. Phosphorylated by EIF2AK2 on serine and threonine residues adjacent to the basic region important for TAR RNA binding and function. Phosphorylation of Tat by EIF2AK2 is dependent on the prior activation of EIF2AK2 by dsRNA.

The protein localises to the host nucleus. It localises to the host nucleolus. Its subcellular location is the host cytoplasm. The protein resides in the secreted. Its function is as follows. Transcriptional activator that increases RNA Pol II processivity, thereby increasing the level of full-length viral transcripts. Recognizes a hairpin structure at the 5'-LTR of the nascent viral mRNAs referred to as the transactivation responsive RNA element (TAR) and recruits the cyclin T1-CDK9 complex (P-TEFb complex) that will in turn hyperphosphorylate the RNA polymerase II to allow efficient elongation. The CDK9 component of P-TEFb and other Tat-activated kinases hyperphosphorylate the C-terminus of RNA Pol II that becomes stabilized and much more processive. Other factors such as HTATSF1/Tat-SF1, SUPT5H/SPT5, and HTATIP2 are also important for Tat's function. Besides its effect on RNA Pol II processivity, Tat induces chromatin remodeling of proviral genes by recruiting the histone acetyltransferases (HATs) CREBBP, EP300 and PCAF to the chromatin. This also contributes to the increase in proviral transcription rate, especially when the provirus integrates in transcriptionally silent region of the host genome. To ensure maximal activation of the LTR, Tat mediates nuclear translocation of NF-kappa-B by interacting with host RELA. Through its interaction with host TBP, Tat may also modulate transcription initiation. Tat can reactivate a latently infected cell by penetrating in it and transactivating its LTR promoter. In the cytoplasm, Tat is thought to act as a translational activator of HIV-1 mRNAs. Extracellular circulating Tat can be endocytosed by surrounding uninfected cells via the binding to several surface receptors such as CD26, CXCR4, heparan sulfate proteoglycans (HSPG) or LDLR. Neurons are rarely infected, but they internalize Tat via their LDLR. Through its interaction with nuclear HATs, Tat is potentially able to control the acetylation-dependent cellular gene expression. Modulates the expression of many cellular genes involved in cell survival, proliferation or in coding for cytokines or cytokine receptors. Tat plays a role in T-cell and neurons apoptosis. Tat induced neurotoxicity and apoptosis probably contribute to neuroAIDS. Circulating Tat also acts as a chemokine-like and/or growth factor-like molecule that binds to specific receptors on the surface of the cells, affecting many cellular pathways. In the vascular system, Tat binds to ITGAV/ITGB3 and ITGA5/ITGB1 integrins dimers at the surface of endothelial cells and competes with bFGF for heparin-binding sites, leading to an excess of soluble bFGF. This is Protein Tat from Human immunodeficiency virus type 1 group M subtype B (isolate RF/HAT3) (HIV-1).